A 221-amino-acid chain; its full sequence is Thiopurine S-methyltransferase (221 aa).

S-adenosyl-L-methionine contacts are provided by Trp12, Leu47, Glu68, and Arg125.

Belongs to the class I-like SAM-binding methyltransferase superfamily. TPMT family.

It is found in the cytoplasm. It carries out the reaction S-adenosyl-L-methionine + a thiopurine = S-adenosyl-L-homocysteine + a thiopurine S-methylether.. This chain is Thiopurine S-methyltransferase, found in Legionella pneumophila (strain Paris).